The primary structure comprises 124 residues: MTAFLAVGFGAAVGAWLRWGLGLWLNPAYPAMPLGTLAANVIGGYFIGLVLAWFAEHPGVPPEARLFVITGLLGGLTTFSTFSAEVVTALTRGLWLTGSLIAFAHLAGSFIATGLGFYSLKFLK.

The next 4 helical transmembrane spans lie at 4-24 (FLAVGFGAAVGAWLRWGLGLW), 34-54 (LGTLAANVIGGYFIGLVLAWF), 67-87 (FVITGLLGGLTTFSTFSAEVV), and 100-120 (LIAFAHLAGSFIATGLGFYSL). Na(+) contacts are provided by glycine 74 and threonine 77.

Belongs to the fluoride channel Fluc/FEX (TC 1.A.43) family.

It localises to the cell inner membrane. The enzyme catalyses fluoride(in) = fluoride(out). With respect to regulation, na(+) is not transported, but it plays an essential structural role and its presence is essential for fluoride channel function. Fluoride-specific ion channel. Important for reducing fluoride concentration in the cell, thus reducing its toxicity. This is Fluoride-specific ion channel FluC from Thiobacillus denitrificans (strain ATCC 25259 / T1).